A 295-amino-acid polypeptide reads, in one-letter code: Protoheme IX farnesyltransferase (295 aa).

The next 9 membrane-spanning stretches (helical) occupy residues 8 to 28, 35 to 55, 84 to 104, 107 to 127, 132 to 152, 162 to 182, 208 to 228, 233 to 253, and 264 to 284; these read VTKP…FLLA, YTLF…GCVF, VSLV…WFGA, LACW…SLYM, VYGT…GYCA, LILL…IAIF, ITLY…GGYA, LVVA…GYKV, and FVFS…DFMV.

Belongs to the UbiA prenyltransferase family. Protoheme IX farnesyltransferase subfamily.

The protein resides in the cell inner membrane. It carries out the reaction heme b + (2E,6E)-farnesyl diphosphate + H2O = Fe(II)-heme o + diphosphate. It participates in porphyrin-containing compound metabolism; heme O biosynthesis; heme O from protoheme: step 1/1. In terms of biological role, converts heme B (protoheme IX) to heme O by substitution of the vinyl group on carbon 2 of heme B porphyrin ring with a hydroxyethyl farnesyl side group. This Enterobacter sp. (strain 638) protein is Protoheme IX farnesyltransferase.